Here is a 106-residue protein sequence, read N- to C-terminus: ATP-dependent Clp protease adapter protein ClpS (106 aa).

This sequence belongs to the ClpS family. Binds to the N-terminal domain of the chaperone ClpA.

Its function is as follows. Involved in the modulation of the specificity of the ClpAP-mediated ATP-dependent protein degradation. In Vibrio cholerae serotype O1 (strain ATCC 39541 / Classical Ogawa 395 / O395), this protein is ATP-dependent Clp protease adapter protein ClpS.